The sequence spans 514 residues: Voltage-gated potassium channel regulatory subunit KCNG1 (514 aa).

Topologically, residues 1 to 224 (MTLLPGDNSD…DMVEKPHSGL (224 aa)) are cytoplasmic. Over residues 181–196 (EREDEEEALDSEDQES) the composition is skewed to acidic residues. The segment at 181–205 (EREDEEEALDSEDQESEGPSTSEGR) is disordered. The chain crosses the membrane as a helical span at residues 225–246 (PGKVFACLSVLFVTVTAVNLSV). The Extracellular portion of the chain corresponds to 247–267 (STLPSLREEEEQGQCSQMCHN). A helical membrane pass occupies residues 268–289 (VFIVESVCVGWFSLEFLLRFIQ). At 290-300 (APSKFAFLRSP) the chain is on the cytoplasmic side. The helical transmembrane segment at 301–321 (LTLIDLVAILPYYVTLLVDGA) threads the bilayer. The Extracellular portion of the chain corresponds to 322–338 (ASSRRKPSTGNSYLDKV). Residues 339–359 (GLVLRVLRALRILYVMRLARH) form a helical; Voltage-sensor membrane-spanning segment. Residues 360 to 374 (SLGLQTLGLTARRCT) lie on the Cytoplasmic side of the membrane. The chain crosses the membrane as a helical span at residues 375 to 396 (REFGLLLLFLCVAIALFAPLLY). Topologically, residues 397–411 (VIENEMADSPEFTSI) are extracellular. The segment at residues 412 to 423 (PACYWWAVITMT) is an intramembrane region (helical). The Selectivity filter motif lies at 424–429 (TVGYGD). Residues 424–431 (TVGYGDMV) lie within the membrane without spanning it. Over 432–438 (PRSTPGQ) the chain is Extracellular. Residues 439–467 (VVALSSILSGILLMAFPVTSIFHTFSRSY) form a helical membrane-spanning segment. Residues 468–514 (LELKQEQERVLIRRAQYLIKTKSQLSGMSQDSDILFGSASSDTRDNN) are Cytoplasmic-facing.

It belongs to the potassium channel family. G (TC 1.A.1.2) subfamily. Kv6.1/KCNG1 sub-subfamily. Heterotetramer with KCNB1 or KCNB2.

It is found in the cell membrane. Functionally, regulatory alpha-subunit of the voltage-gated potassium (Kv) channel which, when coassembled with KCNB1 or KCNB2, can modulate their expression and their gating kinetics by acting on deactivation upon repolarization and inactivation during maintained depolarization. Potassium channel subunit that does not form functional channels by itself. The polypeptide is Voltage-gated potassium channel regulatory subunit KCNG1 (Rattus norvegicus (Rat)).